The following is a 129-amino-acid chain: MAKAPVRARKRVRKQVSDGVAHIHASFNNTIVTITDRQGNALGWATAGGSGFRGSRKSTPFAAQVAAERCAEAVKEYGIKNLEVMVKGPGPGRESTVRALNAAGFRITNITDVTPIPHNGCRPPKKRRV.

This sequence belongs to the universal ribosomal protein uS11 family. Part of the 30S ribosomal subunit. Interacts with proteins S7 and S18. Binds to IF-3.

In terms of biological role, located on the platform of the 30S subunit, it bridges several disparate RNA helices of the 16S rRNA. Forms part of the Shine-Dalgarno cleft in the 70S ribosome. The sequence is that of Small ribosomal subunit protein uS11 from Enterobacter sp. (strain 638).